A 201-amino-acid polypeptide reads, in one-letter code: 3-isopropylmalate dehydratase small subunit (201 aa).

This sequence belongs to the LeuD family. LeuD type 1 subfamily. In terms of assembly, heterodimer of LeuC and LeuD.

It catalyses the reaction (2R,3S)-3-isopropylmalate = (2S)-2-isopropylmalate. It functions in the pathway amino-acid biosynthesis; L-leucine biosynthesis; L-leucine from 3-methyl-2-oxobutanoate: step 2/4. Its function is as follows. Catalyzes the isomerization between 2-isopropylmalate and 3-isopropylmalate, via the formation of 2-isopropylmaleate. The sequence is that of 3-isopropylmalate dehydratase small subunit from Rhizobium meliloti (strain 1021) (Ensifer meliloti).